Here is a 181-residue protein sequence, read N- to C-terminus: HGPRTase-like protein 2 (181 aa).

It belongs to the purine/pyrimidine phosphoribosyltransferase family. Archaeal HPRT subfamily.

Its function is as follows. May catalyze a purine salvage reaction, the substrate is unknown. In Haloquadratum walsbyi (strain DSM 16854 / JCM 12705 / C23), this protein is HGPRTase-like protein 2.